The following is a 713-amino-acid chain: Polyribonucleotide nucleotidyltransferase (713 aa).

Residues Asp493 and Asp499 each coordinate Mg(2+). A KH domain is found at 560-619; it reads PRMITIKINPEKIRDVIGKGGSVIRALTEETGTTIDISDDGVVTIASTNSEGMAEAKKRI. An S1 motif domain is found at 629-697; it reads GHVYEGTVLK…EKGRVRLSAK (69 aa).

It belongs to the polyribonucleotide nucleotidyltransferase family. Mg(2+) is required as a cofactor.

The protein localises to the cytoplasm. The catalysed reaction is RNA(n+1) + phosphate = RNA(n) + a ribonucleoside 5'-diphosphate. Functionally, involved in mRNA degradation. Catalyzes the phosphorolysis of single-stranded polyribonucleotides processively in the 3'- to 5'-direction. The polypeptide is Polyribonucleotide nucleotidyltransferase (Burkholderia pseudomallei (strain 1106a)).